A 181-amino-acid polypeptide reads, in one-letter code: CAPA peptides (181 aa).

An N-terminal signal peptide occupies residues M1–G22. Positions Q23 to D29 are excised as a propeptide. An Isoleucine amide modification is found at I41. The propeptide occupies N44–E54. Position 65 is an isoleucine amide (I65). A propeptide spanning residues S68–L181 is cleaved from the precursor. The segment at T159–L181 is disordered. The segment covering L169–L181 has biased composition (basic and acidic residues).

In terms of processing, a pyrokinin potentially constituted by residues Asn-158 to Gly-170 has so far not been detected and might be completely absent in ants. Periviscerokinin 1 and 2 are expressed in central brain, antennal lobes and gnathal, thoracic and abominal ganglia. Periviscerokinin 2 is also expressed in the retrocerebral complex (at protein level).

It localises to the secreted. Functionally, periviscerokinins mediate visceral muscle contractile activity (myotropic activity). The polypeptide is CAPA peptides (Camponotus floridanus (Florida carpenter ant)).